Consider the following 594-residue polypeptide: Dual specificity protein phosphatase CDC14A (594 aa).

The segment at 7-162 (ELIGACEFMK…GLQHGFFDFE (156 aa)) is a. Residues 163 to 176 (TFDVDEYEHYERVE) are linker. The interval 177-343 (NGDFNWIVPG…QGDIFRSKLK (167 aa)) is b. The Tyrosine-protein phosphatase domain maps to 179-336 (DFNWIVPGKF…KQASLWVQGD (158 aa)). The active-site Phosphocysteine intermediate is the Cys278. The disordered stretch occupies residues 396–435 (GDKLRALKSQRQPRTSPSCAFRSDDTKGHPRAVSQPFRLS). Over residues 404-413 (SQRQPRTSPS) the composition is skewed to polar residues. Ser484 bears the Phosphoserine mark. A disordered region spans residues 487-560 (NLNAATDDPE…PGPHSAKTEE (74 aa)). Over residues 500 to 531 (TSSSSKAGFTASPFTNLLNGSSQPTTRNYPEL) the composition is skewed to polar residues. Residues 532–549 (NNNQYNRSSNSNGGNLNS) are compositionally biased toward low complexity. Ser583 carries the post-translational modification Phosphoserine.

The protein belongs to the protein-tyrosine phosphatase family. Non-receptor class CDC14 subfamily. Interacts with KIF20A, which is required to localize CDC14 to the midzone of the mitotic spindle.

It localises to the nucleus. The protein localises to the cytoplasm. It is found in the cytoskeleton. The protein resides in the microtubule organizing center. Its subcellular location is the centrosome. It localises to the spindle pole. The protein localises to the spindle. It is found in the cell projection. The protein resides in the kinocilium. Its subcellular location is the stereocilium. The enzyme catalyses O-phospho-L-tyrosyl-[protein] + H2O = L-tyrosyl-[protein] + phosphate. It carries out the reaction O-phospho-L-seryl-[protein] + H2O = L-seryl-[protein] + phosphate. The catalysed reaction is O-phospho-L-threonyl-[protein] + H2O = L-threonyl-[protein] + phosphate. Dual-specificity phosphatase. Required for centrosome separation and productive cytokinesis during cell division. Dephosphorylates SIRT2 around early anaphase. May dephosphorylate the APC subunit FZR1/CDH1, thereby promoting APC-FZR1 dependent degradation of mitotic cyclins and subsequent exit from mitosis. Required for normal hearing. This chain is Dual specificity protein phosphatase CDC14A (CDC14A), found in Homo sapiens (Human).